The primary structure comprises 65 residues: Peptide ToAcP (65 aa).

An N-terminal signal peptide occupies residues 1–24 (MKMKMIVVISILLIVFSLSSKAMS). A propeptide spanning residues 25–34 (LEDEQESVQR) is cleaved from the precursor. Ala-58 is modified (alanine amide). The propeptide occupies 59–65 (GRFDPAV).

As to expression, expressed by the venom gland.

The protein resides in the secreted. Helical wheel projections predict no hydrophobic face, suggesting a non-amphipathic peptide. Does not show antifungal activity. This is Peptide ToAcP from Tityus obscurus (Amazonian scorpion).